Here is a 600-residue protein sequence, read N- to C-terminus: Cationic amino acid transporter 4, vacuolar (600 aa).

The Cytoplasmic portion of the chain corresponds to 1–32; sequence MNSLVRRKQVDSVHLIKNDGPHQLAKKLSAVD. Residues 33 to 53 form a helical membrane-spanning segment; the sequence is LVAIGVGTTIGAGVYILVGTV. Topologically, residues 54–60 are vacuolar; the sequence is AREHTGP. A helical transmembrane segment spans residues 61–81; the sequence is ALAVSFFIAGVAAALSACCYA. The Cytoplasmic portion of the chain corresponds to 82-92; that stretch reads ELASRCPSAGS. Residues 93–115 form a helical membrane-spanning segment; sequence AYHYAYICLGEGIAWLVGWALVL. At 116-152 the chain is on the vacuolar side; the sequence is DYTIGGSAIARGITPNLASFFGGLDNLPVFLARQTIP. Residues 153–173 traverse the membrane as a helical segment; it reads GVGIVVDPCAALLIMIVTILL. The Cytoplasmic portion of the chain corresponds to 174–184; the sequence is CFGIKESSTVQ. A helical membrane pass occupies residues 185-205; sequence AIVTSVNVCTLVFIIVVGGYL. The Vacuolar portion of the chain corresponds to 206–220; the sequence is ACKTGWVGYDLPSGY. The chain crosses the membrane as a helical span at residues 221 to 241; it reads FPFGLNGILAGSAVVFFSYIG. The Cytoplasmic segment spans residues 242–264; the sequence is FDTVTSTAEEVKNPQRDLPLGIG. Residues 265–285 form a helical membrane-spanning segment; it reads IALLICCILYMLLSVVIVGLV. Residues 286 to 308 are Vacuolar-facing; sequence PYYSLNPDTPISSAFGDSGMQWA. A helical transmembrane segment spans residues 309–329; that stretch reads AYILTTGAITALCASLLGSLL. Residues 330–360 are Cytoplasmic-facing; it reads AQPRIFMAMARDGLLPAFFSEISPRTQVPVK. The helical transmembrane segment at 361–381 threads the bilayer; the sequence is STIAIGVLAAALAFFMDVAQL. A topological domain (vacuolar) is located at residue Ser382. The helical transmembrane segment at 383–403 threads the bilayer; it reads EMVSVGTLMAFTAVAVCVLVL. Over 404–462 the chain is Cytoplasmic; that stretch reads RYVPPDGVPLSSSSQTLSDTDESRAETENFLVDAIESSDSPLLGNETARDEKYFGKRRK. A helical membrane pass occupies residues 463 to 483; sequence IAAWSIALVCIGVLGLASAAS. Residues 484-492 lie on the Vacuolar side of the membrane; the sequence is AERLPSFPR. A helical transmembrane segment spans residues 493-513; that stretch reads FTICGVSAVILLGSLITLGYI. Residues 514-528 lie on the Cytoplasmic side of the membrane; the sequence is DEDEERHNFGHKGGF. Residues 529–549 form a helical membrane-spanning segment; sequence LCPFVPYLPVLCILINTYLII. Residue Asn550 is a topological domain, vacuolar. A helical transmembrane segment spans residues 551-571; sequence IGAGTWIRVLIWLLIGSMIYI. Residues 572 to 600 are Cytoplasmic-facing; it reads FYGRSHSLLNNAVYVPTMTCTRKTTDHLA.

Belongs to the amino acid-polyamine-organocation (APC) superfamily. Cationic amino acid transporter (CAT) (TC 2.A.3.3) family. As to expression, expressed in roots, stems, flowers, and leaves.

It is found in the vacuole membrane. Functionally, permease involved in the transport of the cationic amino acids. In Arabidopsis thaliana (Mouse-ear cress), this protein is Cationic amino acid transporter 4, vacuolar (CAT4).